Reading from the N-terminus, the 272-residue chain is Orotidine 5'-phosphate decarboxylase (272 aa).

Lys95 functions as the Proton donor in the catalytic mechanism.

It belongs to the OMP decarboxylase family. Type 2 subfamily.

It catalyses the reaction orotidine 5'-phosphate + H(+) = UMP + CO2. The protein operates within pyrimidine metabolism; UMP biosynthesis via de novo pathway; UMP from orotate: step 2/2. In Bordetella petrii (strain ATCC BAA-461 / DSM 12804 / CCUG 43448), this protein is Orotidine 5'-phosphate decarboxylase.